A 451-amino-acid polypeptide reads, in one-letter code: tRNA-2-methylthio-N(6)-dimethylallyladenosine synthase (451 aa).

An MTTase N-terminal domain is found at 2-119 (QNLYIKTYGC…LPDLLDACLA (118 aa)). Cys-11, Cys-48, Cys-82, Cys-157, Cys-161, and Cys-164 together coordinate [4Fe-4S] cluster. One can recognise a Radical SAM core domain in the interval 143–377 (GRDGATAFVT…RINGLAQGYA (235 aa)). The 64-residue stretch at 378–441 (QALVGTQQAV…PNSLRGRAAL (64 aa)) folds into the TRAM domain.

Belongs to the methylthiotransferase family. MiaB subfamily. As to quaternary structure, monomer. [4Fe-4S] cluster serves as cofactor.

It localises to the cytoplasm. It catalyses the reaction N(6)-dimethylallyladenosine(37) in tRNA + (sulfur carrier)-SH + AH2 + 2 S-adenosyl-L-methionine = 2-methylsulfanyl-N(6)-dimethylallyladenosine(37) in tRNA + (sulfur carrier)-H + 5'-deoxyadenosine + L-methionine + A + S-adenosyl-L-homocysteine + 2 H(+). Functionally, catalyzes the methylthiolation of N6-(dimethylallyl)adenosine (i(6)A), leading to the formation of 2-methylthio-N6-(dimethylallyl)adenosine (ms(2)i(6)A) at position 37 in tRNAs that read codons beginning with uridine. The polypeptide is tRNA-2-methylthio-N(6)-dimethylallyladenosine synthase (Acidithiobacillus ferrooxidans (strain ATCC 23270 / DSM 14882 / CIP 104768 / NCIMB 8455) (Ferrobacillus ferrooxidans (strain ATCC 23270))).